The sequence spans 480 residues: Nuclear receptor subfamily 6 group A member 1 (480 aa).

The segment at 1–32 (MERDEPPPSGGGGGGGSAGFLEPPAALPPPPR) is disordered. The segment at residues 57 to 132 (QRTCLICGDR…MGMNRKAIRE (76 aa)) is a DNA-binding region (nuclear receptor). Cys60, Cys63, Cys77, Cys80, Cys96, Cys102, Cys112, and Cys115 together coordinate Zn(2+). 2 consecutive NR C4-type zinc fingers follow at residues 60 to 80 (CLICGDRATGLHYGIISCEGC) and 96 to 120 (CSRDKNCVMSRKQRNRCQYCRLLKC). Disordered regions lie at residues 131–150 (REDGMPGGRNKSIGPVQISE) and 162–199 (FEEEANHWSNHGDSDHSSPGNRASESNQPSPGSTLSSS). Positions 165–177 (EANHWSNHGDSDH) are enriched in basic and acidic residues. A sufficient for interaction with UIMC1 region spans residues 172–253 (HGDSDHSSPG…RSLDPQSYSL (82 aa)). Positions 187 to 199 (SNQPSPGSTLSSS) are enriched in low complexity. In terms of domain architecture, NR LBD spans 249–480 (QSYSLIHQLL…HSCKTSVGKE (232 aa)).

This sequence belongs to the nuclear hormone receptor family. NR6 subfamily. In terms of assembly, homodimer. Interacts with UIMC1. As to expression, shows highest expression in the germ cells of the adult testis.

It localises to the nucleus. Orphan nuclear receptor that binds to a response element containing the sequence 5'-TCAAGGTCA-3'. Acts as a regulator of embryonic stem cell pluripotency by mediating repression of POU5F1/OCT4: binds to the DR0 element within the POU5F1/OCT4 promoter and inhibits POU5F1/OCT4 expression during embryonic stem cell differentiation. Involved in the regulation of gene expression in germ cell development during gametogenesis. The polypeptide is Nuclear receptor subfamily 6 group A member 1 (NR6A1) (Homo sapiens (Human)).